A 438-amino-acid polypeptide reads, in one-letter code: UDP-N-acetylmuramoylalanine--D-glutamate ligase (438 aa).

115–121 serves as a coordination point for ATP; it reads GSNGKST.

The protein belongs to the MurCDEF family.

It is found in the cytoplasm. The catalysed reaction is UDP-N-acetyl-alpha-D-muramoyl-L-alanine + D-glutamate + ATP = UDP-N-acetyl-alpha-D-muramoyl-L-alanyl-D-glutamate + ADP + phosphate + H(+). The protein operates within cell wall biogenesis; peptidoglycan biosynthesis. Its function is as follows. Cell wall formation. Catalyzes the addition of glutamate to the nucleotide precursor UDP-N-acetylmuramoyl-L-alanine (UMA). In Vibrio atlanticus (strain LGP32) (Vibrio splendidus (strain Mel32)), this protein is UDP-N-acetylmuramoylalanine--D-glutamate ligase.